The chain runs to 269 residues: Aquaporin-1 (269 aa).

Residues 1–11 (MASEIKKKLFW) lie on the Cytoplasmic side of the membrane. A helical membrane pass occupies residues 12–29 (RAVVAEFLAMTLFVFISI). Residues 30 to 46 (GSALGFNYPLERNQTLV) are Extracellular-facing. The helical transmembrane segment at 47-65 (QDNVKVSLAFGLSIATLAQ) threads the bilayer. The Cytoplasmic portion of the chain corresponds to 66–68 (SVG). Residues 69-82 (HISGAHLNPAVTLG) lie within the membrane without spanning it. The NPA 1 motif lies at 76–78 (NPA). Residues 83–90 (LLLSCQIS) are Cytoplasmic-facing. The chain crosses the membrane as a helical span at residues 91 to 109 (ILRAVMYIIAQCVGAIVAT). At 110 to 133 (AILSGITSSLVDNSLGRNDLAHGV) the chain is on the extracellular side. Residues 134 to 153 (NSGQGLGIEIIGTLQLVLCV) traverse the membrane as a helical segment. Residues 154-163 (LATTDRRRRD) are Cytoplasmic-facing. Residues 164 to 181 (LGGSAPLAIGLSVALGHL) form a helical membrane-spanning segment. Topologically, residues 182–186 (LAIDY) are extracellular. The stretch at 187-199 (TGCGINPARSFGS) is an intramembrane region. Positions 192-194 (NPA) match the NPA 2 motif. At 200-206 (AVLTRNF) the chain is on the extracellular side. N-linked (GlcNAc...) asparagine glycosylation is present at asparagine 205. The helical transmembrane segment at 207-224 (SNHWIFWVGPFIGGALAV) threads the bilayer. Residues 225–269 (LIYDFILAPRSSDFTDRMKVWTSGQVEEYDLDADDINSRVEMKPK) lie on the Cytoplasmic side of the membrane. Position 247 is a phosphoserine (serine 247). Tyrosine 253 is subject to Phosphotyrosine. Serine 262 bears the Phosphoserine mark.

This sequence belongs to the MIP/aquaporin (TC 1.A.8) family. Homotetramer; each monomer provides an independent water pore. Component of the ankyrin-1 complex in the erythrocyte, composed of ANK1, RHCE, RHAG, SLC4A1, EPB42, GYPA, GYPB and AQP1. Interacts with EPHB2; involved in endolymph production in the inner ear. Identified in a complex with STOM. Interacts (via the N-terminal) with ANK1 (via ANK 1-5 repeats). Interacts (via the C-terminal) with EPB42. Detected in erythrocytes (at protein level). In the kidney, expressed on luminal and basal borders of proximal tubules and in the thin limb of Henle's loop (at protein level).

The protein resides in the cell membrane. It catalyses the reaction H2O(in) = H2O(out). The catalysed reaction is nitric oxide(out) = nitric oxide(in). It carries out the reaction CO2(out) = CO2(in). The enzyme catalyses glycerol(in) = glycerol(out). It catalyses the reaction H2O2(out) = H2O2(in). The catalysed reaction is K(+)(in) = K(+)(out). It carries out the reaction Na(+)(in) = Na(+)(out). Forms a water channel that facilitates the transport of water across cell membranes, playing a crucial role in water homeostasis in various tissues. Could also be permeable to small solutes including hydrogen peroxide, glycerol and gases such as amonnia (NH3), nitric oxide (NO) and carbon dioxide (CO2). Recruited to the ankyrin-1 complex, a multiprotein complex of the erythrocyte membrane, it could be part of a CO2 metabolon, linking facilitated diffusion of CO2 across the membrane, anion exchange of Cl(-)/HCO3(-) and interconversion of dissolved CO2 and carbonic acid in the cytosol. In vitro, it shows non-selective gated cation channel activity and may be permeable to cations like K(+) and Na(+) in vivo. The polypeptide is Aquaporin-1 (Mus musculus (Mouse)).